The sequence spans 425 residues: UDP-sugar transporter protein SLC35A5 (425 aa).

Topologically, residues 1–7 (MESNCGH) are cytoplasmic. The helical transmembrane segment at 8-28 (PMLSVSSAMYTFLLGAIFITL) threads the bilayer. Residues 29–52 (SSSRILLVKYSANEENKYDYLPTT) lie on the Lumenal side of the membrane. A helical transmembrane segment spans residues 53 to 73 (VNVCSELVKLVFCALVSFWVL). At 74-92 (KKEDHQNRKLRCGSWKEFF) the chain is on the cytoplasmic side. Residues 93 to 115 (NFMKWSIPAFLYFLDNLIVFYVL) traverse the membrane as a helical segment. The Lumenal segment spans residues 116-119 (SYLQ). The helical transmembrane segment at 120–142 (PAMAVIFSNFSIITTALLFRIVL) threads the bilayer. Topologically, residues 143 to 147 (KRHLN) are cytoplasmic. The helical transmembrane segment at 148–168 (GIQWASLLILFLSIVALTSGT) threads the bilayer. Over 169–228 (ETSQHSLAGHGFHHDALFSPSNSCLLFRSECPRKDNCTAKEWTFSEAQWNTTARVFSHIR) the chain is Lumenal. Asn204 and Asn218 each carry an N-linked (GlcNAc...) asparagine glycan. A helical membrane pass occupies residues 229-249 (LGLGHVLIIVQCFISSMANIY). Topologically, residues 250-263 (NEKILKEGNQLTES) are cytoplasmic. A helical transmembrane segment spans residues 264–284 (IFVQNSKLYFFGVLFNGLTLG). Residues 285–303 (LQSGNRDQIKNCGIFYGHN) lie on the Lumenal side of the membrane. A helical transmembrane segment spans residues 304–324 (AFSVALIFVTAFQGLSVAFIL). The Cytoplasmic segment spans residues 325 to 330 (KFLDNM). The helical transmembrane segment at 331–351 (FHVLMAQVTTVVITTVSVLVF) threads the bilayer. Topologically, residues 352 to 354 (DFR) are lumenal. Residues 355-375 (PSLEFFLEAPSVLLSILIYNA) form a helical membrane-spanning segment. Topologically, residues 376–425 (SNPQGVENVPRKERIRDLSGTLWERSSGDGEELERLTKPKSDIESDEDTF) are cytoplasmic. 3 positions are modified to phosphoserine: Ser394, Ser416, and Ser420. The disordered stretch occupies residues 398 to 425 (WERSSGDGEELERLTKPKSDIESDEDTF). Positions 408–418 (LERLTKPKSDI) are enriched in basic and acidic residues.

It belongs to the nucleotide-sugar transporter family. SLC35A subfamily. As to quaternary structure, probably forms homooligomers and heterooligomers with SLC35A1, SLC35A2, SLC35A3 and SLC35A4.

It is found in the golgi apparatus membrane. The enzyme catalyses UMP(out) + UDP-alpha-D-glucuronate(in) = UMP(in) + UDP-alpha-D-glucuronate(out). The catalysed reaction is UMP(out) + UDP-N-acetyl-alpha-D-glucosamine(in) = UMP(in) + UDP-N-acetyl-alpha-D-glucosamine(out). It catalyses the reaction UDP-N-acetyl-alpha-D-galactosamine(in) + UMP(out) = UDP-N-acetyl-alpha-D-galactosamine(out) + UMP(in). In terms of biological role, probable UDP-sugar:UMP transmembrane antiporter involved in UDP-alpha-D-glucuronate/UDP-GlcA, UDP-GlcNAc/UDP-N-acetyl-alpha-D-glucosamine and UDP-N-acetyl-alpha-D-galactosamine/UDP-GalNAc transport from the cytosol to the lumen of the Golgi. The polypeptide is UDP-sugar transporter protein SLC35A5 (Bos taurus (Bovine)).